A 769-amino-acid chain; its full sequence is 5-methyltetrahydropteroyltriglutamate--homocysteine methyltransferase (769 aa).

5-methyltetrahydropteroyltri-L-glutamate-binding positions include 16 to 19 (RELK) and Lys-121. Positions 415 to 450 (SMTERDSPHSSRSPLQREALDLPTLPTTTIGSFPQT) are disordered. A compositionally biased stretch (polar residues) spans 439–449 (LPTTTIGSFPQ). L-homocysteine contacts are provided by residues 444–446 (IGS) and Glu-497. L-methionine contacts are provided by residues 444–446 (IGS) and Glu-497. 5-methyltetrahydropteroyltri-L-glutamate contacts are provided by residues 528 to 529 (RC) and Trp-574. An L-homocysteine-binding site is contributed by Asp-612. L-methionine is bound at residue Asp-612. Glu-618 contributes to the 5-methyltetrahydropteroyltri-L-glutamate binding site. Positions 654, 656, and 678 each coordinate Zn(2+). His-707 (proton donor) is an active-site residue. Zn(2+) is bound at residue Cys-739.

It belongs to the vitamin-B12 independent methionine synthase family. The cofactor is Zn(2+).

It catalyses the reaction 5-methyltetrahydropteroyltri-L-glutamate + L-homocysteine = tetrahydropteroyltri-L-glutamate + L-methionine. It functions in the pathway amino-acid biosynthesis; L-methionine biosynthesis via de novo pathway; L-methionine from L-homocysteine (MetE route): step 1/1. Functionally, catalyzes the transfer of a methyl group from 5-methyltetrahydrofolate to homocysteine resulting in methionine formation. The protein is 5-methyltetrahydropteroyltriglutamate--homocysteine methyltransferase of Salinibacter ruber (strain DSM 13855 / M31).